Reading from the N-terminus, the 208-residue chain is Protein disulfide-isomerase A3 (208 aa).

A Thioredoxin 1 domain is found at 1-44; it reads RLAPEYEAAATRYGVSGYPTLKDGEEAGAYDGPRTADGIVSHLK. Position 44 is an N6-succinyllysine (K44). An N6-acetyllysine modification is found at K49. The residue at position 133 (T133) is a Phosphothreonine. In terms of domain architecture, Thioredoxin 2 spans 151-208; the sequence is SRFLQDYFDGNLKRYLKSEPIPETNDGPVKMDATANDVPSPYEVKGFPTIYFSPANKK. Position 163 is an N6-acetyllysine (K163).

This sequence belongs to the protein disulfide isomerase family. In terms of assembly, part of the major histocompatibility complex class I (MHC I) peptide loading complex composed of TAP1, TAP2, B2M, MHC heavy chain, TAPBP, PDIA3, and CALR. Interacts with ERP27 and CANX. Interacts with SERPINA2 and SERPINA1. Interacts with ATP2A2. In terms of processing, within the major histocompatibility complex class I (MHC I) peptide loading complex forms reversible disulfide-linked heterodimers with TAPBP as part of its protein folding chaperone activity. This is essential to assist the dynamic assembly of the MHC I complex with high affinity antigens in the endoplasmic reticulum. Post-translationally, phosphorylated. In the caput epididymal spermatozoa, detected in the mid-peice and at low levels in the principal piece. In the cauda epididymal spermatozoa, detected at very low levels in the principal piece and not in the mid-piece (at protein level).

The protein localises to the endoplasmic reticulum. The protein resides in the endoplasmic reticulum lumen. It localises to the melanosome. It carries out the reaction Catalyzes the rearrangement of -S-S- bonds in proteins.. In terms of biological role, protein disulfide isomerase that catalyzes the formation, isomerization, and reduction or oxidation of disulfide bonds in client proteins and functions as a protein folding chaperone. Core component of the major histocompatibility complex class I (MHC I) peptide loading complex where it functions as an essential folding chaperone for TAPBP. Through TAPBP, assists the dynamic assembly of the MHC I complex with high affinity antigens in the endoplasmic reticulum. Therefore, plays a crucial role in the presentation of antigens to cytotoxic T cells in adaptive immunity. In Mesocricetus auratus (Golden hamster), this protein is Protein disulfide-isomerase A3.